The chain runs to 276 residues: Probable endonuclease LCL3 (276 aa).

A helical transmembrane segment spans residues 17–37 (FNVVILSIFFSGSFIGAWAFF). Residues 58-263 (RWLFGKVTAV…KARRRGIWSQ (206 aa)) form the TNase-like domain. Arg154 is a catalytic residue. Asp159 provides a ligand contact to Ca(2+). Catalysis depends on residues Glu162 and Arg202.

Belongs to the LCL3 family.

The protein resides in the mitochondrion. It is found in the membrane. The protein is Probable endonuclease LCL3 (LCL3) of Zygosaccharomyces rouxii (strain ATCC 2623 / CBS 732 / NBRC 1130 / NCYC 568 / NRRL Y-229).